Consider the following 1334-residue polypeptide: Aldehyde oxidase 4 (1334 aa).

Residues 6–93 (DELIFFVNGK…GAAVTTVEGV (88 aa)) enclose the 2Fe-2S ferredoxin-type domain. [2Fe-2S] cluster is bound by residues cysteine 45, cysteine 50, cysteine 53, and cysteine 75. Residue glutamine 114 participates in Mo-molybdopterin binding. Positions 115, 118, 150, and 152 each coordinate [2Fe-2S] cluster. Position 152 (cysteine 152) interacts with Mo-molybdopterin. The 187-residue stretch at 235–421 (FQGERTIWIM…LSVFIPYSGQ (187 aa)) folds into the FAD-binding PCMH-type domain. Residues 263–270 (LVMGNTAV), alanine 345, threonine 354, histidine 358, aspartate 367, and alanine 411 contribute to the FAD site. Residues alanine 802, 802 to 803 (AF), leucine 1043, 1084 to 1087 (GSMG), glutamine 1199, and leucine 1263 contribute to the Mo-molybdopterin site. The active-site Proton acceptor; for azaheterocycle hydroxylase activity is the glutamate 1265.

This sequence belongs to the xanthine dehydrogenase family. As to quaternary structure, homodimer. The cofactor is [2Fe-2S] cluster. It depends on FAD as a cofactor. Requires Mo-molybdopterin as cofactor.

It is found in the cytoplasm. It catalyses the reaction an aldehyde + O2 + H2O = a carboxylate + H2O2 + H(+). It carries out the reaction retinal + O2 + H2O = retinoate + H2O2 + H(+). In terms of biological role, aldehyde oxidase able to catalyze the oxidation of retinaldehyde into retinoate. Acts as a negative modulator of the epidermal trophism. May be able to oxidize a wide variety of aldehydes into their corresponding carboxylates and to hydroxylate azaheterocycles. The protein is Aldehyde oxidase 4 (Aox4) of Rattus norvegicus (Rat).